A 744-amino-acid polypeptide reads, in one-letter code: Merozoite surface protein 9 (744 aa).

An N-terminal signal peptide occupies residues 1-23 (MMNMKIVLFSLLLFVIRWNIISC). The interaction with MSP1 and host SLC4A1/Band 3 stretch occupies residues 77–235 (KELLKEKQYT…VNDEDDVNDE (159 aa)). Disordered regions lie at residues 202 to 282 (KSQG…ATAY), 459 to 487 (DNQA…PTED), 512 to 540 (NNTP…ENFD), and 666 to 744 (VDAL…EESK). The span at 211–224 (SQNQNENNDNQKYQ) shows a compositional bias: polar residues. 8 consecutive repeat copies span residues 226–231 (VNDEDD), 232–237 (VNDEED), 238–243 (TNDDED), 244–249 (TNDEED), 250–255 (TNDDED), 256–261 (TNDDED), 262–267 (TNDEED), and 268–273 (TNDEED). The 8 X 6 AA tandem repeats of [VT]-N-D-[ED]-[ED]-D stretch occupies residues 226 to 273 (VNDEDDVNDEEDTNDDEDTNDEEDTNDDEDTNDDEDTNDEEDTNDEED). Positions 226–274 (VNDEDDVNDEEDTNDDEDTNDEEDTNDDEDTNDDEDTNDEEDTNDEEDH) are enriched in acidic residues. Residues 364–528 (LKDNLINYEF…PPTQSKKKNK (165 aa)) form an interaction with MSP1 and host SLC4A1/Band 3 region. Residues 459–473 (DNQAVDTKSMEEPKV) show a composition bias toward basic and acidic residues. Positions 512–521 (NNTPNVVPPT) are enriched in low complexity. Residues 644-734 (NQETEEEMEK…QEEEEEEEIV (91 aa)) adopt a coiled-coil conformation. Basic and acidic residues-rich tracts occupy residues 672–698 (KNKE…KEKE) and 706–719 (EKEK…KEEK). Acidic residues predominate over residues 720 to 734 (EKEEEQEEEEEEEIV).

This sequence belongs to the plasmodium ABRA family. Forms a complex composed of MSP1, MSP6, MSP7, MSP9 and MSP3; within the complex, MSP6 and MSP9 mediate the binding to the host erythrocyte. Interacts with MSP1 subunits p19 and p42; the interaction is direct. Interacts with host SLC4A1/Band 3 protein (via the 5ABC region). MSP1 subunits p19 or p42, and MSP9 form a co-ligand complex that interacts with host SLC4A1/Band 3 protein. In terms of processing, not glycosylated.

Its subcellular location is the cell membrane. The protein resides in the parasitophorous vacuole lumen. It localises to the secreted. During the asexual blood stage, involved in the sialic acid-independent (SAID) merozoite invasion of host erythrocytes by binding to host SLC4A1/Band 3 protein on the surface of the host erythrocyte. The sequence is that of Merozoite surface protein 9 from Plasmodium falciparum (isolate 7G8).